The chain runs to 60 residues: Large ribosomal subunit protein bL32 (60 aa).

The interval 1 to 60 (MAVQQNKKSRSARDMRRSHDALESNALSVEKSTGEVHLRHHVSPDGFYRGRKVVDKGSDE) is disordered. A compositionally biased stretch (basic and acidic residues) spans 11-22 (SARDMRRSHDAL).

The protein belongs to the bacterial ribosomal protein bL32 family.

The protein is Large ribosomal subunit protein bL32 of Pseudomonas aeruginosa (strain LESB58).